The following is a 189-amino-acid chain: Peptidyl-tRNA hydrolase (189 aa).

Residue Tyr14 coordinates tRNA. His19 acts as the Proton acceptor in catalysis. TRNA-binding residues include Phe64, Asn66, and Asn112.

The protein belongs to the PTH family. In terms of assembly, monomer.

The protein localises to the cytoplasm. The catalysed reaction is an N-acyl-L-alpha-aminoacyl-tRNA + H2O = an N-acyl-L-amino acid + a tRNA + H(+). Hydrolyzes ribosome-free peptidyl-tRNAs (with 1 or more amino acids incorporated), which drop off the ribosome during protein synthesis, or as a result of ribosome stalling. In terms of biological role, catalyzes the release of premature peptidyl moieties from peptidyl-tRNA molecules trapped in stalled 50S ribosomal subunits, and thus maintains levels of free tRNAs and 50S ribosomes. The sequence is that of Peptidyl-tRNA hydrolase from Erythrobacter litoralis (strain HTCC2594).